The following is a 473-amino-acid chain: Argininosuccinate lyase (473 aa).

The protein belongs to the lyase 1 family. Argininosuccinate lyase subfamily.

It is found in the cytoplasm. It catalyses the reaction 2-(N(omega)-L-arginino)succinate = fumarate + L-arginine. Its pathway is amino-acid biosynthesis; L-arginine biosynthesis; L-arginine from L-ornithine and carbamoyl phosphate: step 3/3. The chain is Argininosuccinate lyase from Chelativorans sp. (strain BNC1).